The chain runs to 344 residues: Fructose-1,6-bisphosphatase class 1 (344 aa).

Mg(2+) contacts are provided by E91, D110, L112, and D113. Substrate contacts are provided by residues 113–116 and N200; that span reads DGSS. E272 is a Mg(2+) binding site.

Belongs to the FBPase class 1 family. Homotetramer. Mg(2+) is required as a cofactor.

The protein resides in the cytoplasm. It catalyses the reaction beta-D-fructose 1,6-bisphosphate + H2O = beta-D-fructose 6-phosphate + phosphate. It functions in the pathway carbohydrate biosynthesis; Calvin cycle. The polypeptide is Fructose-1,6-bisphosphatase class 1 (Rhodopseudomonas palustris (strain BisB18)).